Reading from the N-terminus, the 263-residue chain is Alpha-tubulin N-acetyltransferase 2 (263 aa).

The 181-residue stretch at 1–181 (MEIAFDLSSI…NKYAVFPNFF (181 aa)) folds into the N-acetyltransferase domain. Residue 115-128 (FFIVPTEQRSGNGF) participates in acetyl-CoA binding. Disordered stretches follow at residues 191–224 (TPRQTKRASRASSAVSSHTTSRNTSPIGRNRPRH) and 236–263 (FPRGRSVIDPNSPAGFKLTRDQRHEPIW). A compositionally biased stretch (low complexity) spans 200–212 (RASSAVSSHTTSR). The segment covering 253–263 (LTRDQRHEPIW) has biased composition (basic and acidic residues).

Belongs to the acetyltransferase ATAT1 family.

It catalyses the reaction L-lysyl-[alpha-tubulin] + acetyl-CoA = N(6)-acetyl-L-lysyl-[alpha-tubulin] + CoA + H(+). Its function is as follows. Specifically acetylates 'Lys-40' in alpha-tubulin/mec-12 on the lumenal side of microtubules. Promotes microtubule destabilization and accelerates microtubule dynamics; this activity may be independent of acetylation activity. Acetylates alpha-tubulin with a slow enzymatic rate, due to a catalytic site that is not optimized for acetyl transfer. Enters the microtubule through each end and diffuses quickly throughout the lumen of microtubules. Acetylates only long/old microtubules because of its slow acetylation rate since it does not have time to act on dynamically unstable microtubules before the enzyme is released. Required for the maintenance of touch receptor neurons and possibly other type of neurons involved in locomotion. This is Alpha-tubulin N-acetyltransferase 2 (atat-2) from Caenorhabditis briggsae.